Consider the following 280-residue polypeptide: Phosphatidylglycerol--prolipoprotein diacylglyceryl transferase (280 aa).

The next 4 membrane-spanning stretches (helical) occupy residues 30 to 50 (WYGLAYVVGILLGWFYARRIV), 71 to 91 (FLLWAAGGIVLGGRIGYILFY), 106 to 126 (IWNGGMSFHGGLVGTTLAMII), and 132 to 152 (AIPIWSLFDVVAAVVPIGLFF). Position 154 (R154) interacts with a 1,2-diacyl-sn-glycero-3-phospho-(1'-sn-glycerol). 3 consecutive transmembrane segments (helical) span residues 188–208 (QLYEAALEGLVLLAVLAWFVY), 217–237 (GLVTGIFVCGYAASRIFVEFF), and 251–271 (WLTMGMVLSVPMALIGIWAIA).

The protein belongs to the Lgt family.

It is found in the cell inner membrane. It carries out the reaction L-cysteinyl-[prolipoprotein] + a 1,2-diacyl-sn-glycero-3-phospho-(1'-sn-glycerol) = an S-1,2-diacyl-sn-glyceryl-L-cysteinyl-[prolipoprotein] + sn-glycerol 1-phosphate + H(+). It participates in protein modification; lipoprotein biosynthesis (diacylglyceryl transfer). In terms of biological role, catalyzes the transfer of the diacylglyceryl group from phosphatidylglycerol to the sulfhydryl group of the N-terminal cysteine of a prolipoprotein, the first step in the formation of mature lipoproteins. This chain is Phosphatidylglycerol--prolipoprotein diacylglyceryl transferase, found in Sinorhizobium medicae (strain WSM419) (Ensifer medicae).